We begin with the raw amino-acid sequence, 166 residues long: Fer3-like protein (166 aa).

A disordered region spans residues 57-88 (FEEGDPEEEECEVDQGDGEEEEEEERGRGVSL). Positions 60-80 (GDPEEEECEVDQGDGEEEEEE) are enriched in acidic residues. The region spanning 101–153 (AQRQAANIRERKRMFNLNEAFDQLRRKVPTFAYEKRLSRIETLRLAIVYISFM) is the bHLH domain.

Heterodimer with TCF3/E12. Interacts with the bHLH domain of TCF3/E12.

The protein resides in the nucleus. Functionally, transcription factor that binds to the E-box and functions as inhibitor of transcription. DNA binding requires dimerization with an E protein. Inhibits transcription activation by ASCL1/MASH1 by sequestering E proteins. The polypeptide is Fer3-like protein (FERD3L) (Homo sapiens (Human)).